The sequence spans 1523 residues: MLPTSSNNEENRKPENSFPPTHFDTWERLSDYQKPSSSTTDDAYGKPVAKISPTASIDERETGIIGSTLRQDSTDSDSTGSSNMNPYDRLDKEVISKKNAHTNSYRNDVDELEGSLRTLGLQKVNAPTISSFSAWKSQSSALPAPSSSETSKIVKAEIKAPQQPMSLNPNYFDVMREMEKSMNIFTKLFRGSQIRNKNDLPSGRHLVNYRQNHAFDFAAMSHIWKENKMENLPKLPHRANLVMTLPSSRVRNSKICAFYRVLEKKEDKYILVACHVNIHGFHRGDLRFVEVNNRTVLKGFERSSVIGHLFLGDILTVTELTRCNETVSNVASSVEDASPDAPCQWMASKVVLFPRHEPVNVQFKFTCNGMASVVSTNEPMSVILNNLTEAKTNVEYTGIAFKSASYTVHTEDYTKKWYERIQEEISNIMIYPKALSTIYQYEEYTPNFVVEKQEQEEHPYQQDLEDLDLYRQHEMQTNVFTKFFDIGKSEKRKFGPGKSISNCRHSDAIDFAAMSYIWKNIRQQHLPKLPKLPNMVLPLPTSMPLDSEICAFYRVLVENKSKYILIACHMNVHGYHRGDLRFLEINESTKLYGFEGRSVIGQLFLGDIVAVTELARCNGHGSDAFKIPFDVSMSSQNTCTWMASKITLPSRPPPASVLFSFMKNRMAVVKGCDEPMNVEVKSIQNVEPDLIYKGTAFKPEKPELNFTEGFIKKKRHQIGSITLRIASYPNSFGTIYNFQESDIDNEHYKIGINAFSEEKFTEISLDEREKIVETCSLMGFSAANTIFNGRFDCRAFKMEEIKKNGMTVMFCIENPTSQPTLGLWCAGNRIVIGGPNGDVNGAIETVIDDPDIGYLRIAARLSRDIPKKFSFKGDGEFFVSQREVFENEILDDGYFKTLDPGCNGRRIIETLYGGKPLERVVVDKRDSSIERMMSQLFGVGSGISEHKTSGKKSEDTPTQFYFPSTPEPLALNKYQCEYVQMLLDGNPLIIGSSPFGCGKSMTIITAALELYKLKKNRKQLLITQSNYASVNLIDIAQRVCLSGDDDLKDLKFVRFVSEKNWNELPSNCRTDSDMPYLMNKLFKDWAMGRIDLTNLTCLKTHHYVQMVSHIIKNDLVNPMLFGDHIAQIYDKLSADFSRAPHAQTLVEAFFMIYKPDLVMVTADSAKGLLNILRDVCAVQIDEASQLAECTLLGLLKSFNNASFGLIGDIHQLPPYCEEGLEGKLKDFGIGNTMERAIKEKMFPVCTLRNVYRCHPKTTELLSELFYDGALVSGVSELARSDFMTKRDDFWPNPKFPMMFVNNTGASTKMGTSTSNSSEKSIVGEIVQNLINDPRNPVNPSDIGVISFYSAQTSILTEHLRGSGVKCGTVDAFQGSEKEIIIMCSTNERISDFMQLSNRLNVAMSRAKQVTIIIGHLDGLRRANYWSTIVNKIEQNGNLVNANDWYQNQRRNKVSLSSYPLISTSRQSKQQRANEYNSQHKHVKRQSNNDYGSQRSVTNSLNPEFVGKWDDETYGDWPTIQKST.

A disordered region spans residues 1–89 (MLPTSSNNEE…GSSNMNPYDR (89 aa)). 993–1000 (SPFGCGKS) is a binding site for ATP. 2 stretches are compositionally biased toward polar residues: residues 1463-1476 (TSRQSKQQRANEYN) and 1485-1498 (QSNNDYGSQRSVTN). A disordered region spans residues 1463–1498 (TSRQSKQQRANEYNSQHKHVKRQSNNDYGSQRSVTN).

The protein belongs to the DNA2/NAM7 helicase family.

This is an uncharacterized protein from Caenorhabditis elegans.